Here is a 710-residue protein sequence, read N- to C-terminus: Protein CNGC15a (710 aa).

Helical transmembrane passes span 85–105 (IFLA…YLPV), 115–135 (SIGL…FYII), 174–194 (LWSD…AVIP), 207–226 (VVRL…IYPL), 248–268 (YLTL…LLSI), and 368–388 (AEIN…ALLI). An a nucleoside 3',5'-cyclic phosphate-binding site is contributed by 474-559 (LFDQMDDRML…WALDPRPTAV (86 aa)).

It belongs to the cyclic nucleotide-gated cation channel (TC 1.A.1.5) family. As to quaternary structure, interacts (via N-terminus) with DMI1 (via c-terminus). The Nod factor has no effect on this interaction, implying that the complex is maintained after activation. As to expression, expressed in roots, stems, leaves, flowers and pods.

Its subcellular location is the nucleus membrane. Its function is as follows. Cyclic nucleotide-gated channel involved in the establishment of both rhizobial and mycorrhizal associations. Required for full activation of nuclear-localized Ca(2+) oscillations by Nod and Myc factors. Simultaneous activation of the K(+)-permeable channel DMI1 and the Ca(2+) channel CNGC15 can give rise to sustained Ca(2+) oscillations. May function during fertilization in both female and male gametophytic Ca(2+) signaling. This Medicago truncatula (Barrel medic) protein is Protein CNGC15a.